We begin with the raw amino-acid sequence, 889 residues long: Alanine--tRNA ligase (889 aa).

Zn(2+) contacts are provided by His-564, His-568, Cys-677, and His-681.

The protein belongs to the class-II aminoacyl-tRNA synthetase family. Zn(2+) is required as a cofactor.

It localises to the cytoplasm. The enzyme catalyses tRNA(Ala) + L-alanine + ATP = L-alanyl-tRNA(Ala) + AMP + diphosphate. Its function is as follows. Catalyzes the attachment of alanine to tRNA(Ala) in a two-step reaction: alanine is first activated by ATP to form Ala-AMP and then transferred to the acceptor end of tRNA(Ala). Also edits incorrectly charged Ser-tRNA(Ala) and Gly-tRNA(Ala) via its editing domain. The sequence is that of Alanine--tRNA ligase from Rhodopseudomonas palustris (strain ATCC BAA-98 / CGA009).